An 84-amino-acid chain; its full sequence is Exodeoxyribonuclease 7 small subunit (84 aa).

Belongs to the XseB family. In terms of assembly, heterooligomer composed of large and small subunits.

The protein resides in the cytoplasm. It catalyses the reaction Exonucleolytic cleavage in either 5'- to 3'- or 3'- to 5'-direction to yield nucleoside 5'-phosphates.. Its function is as follows. Bidirectionally degrades single-stranded DNA into large acid-insoluble oligonucleotides, which are then degraded further into small acid-soluble oligonucleotides. The polypeptide is Exodeoxyribonuclease 7 small subunit (Haemophilus influenzae (strain ATCC 51907 / DSM 11121 / KW20 / Rd)).